The primary structure comprises 338 residues: Heat-inducible transcription repressor HrcA (338 aa).

It belongs to the HrcA family.

In terms of biological role, negative regulator of class I heat shock genes (grpE-dnaK-dnaJ and groELS operons). Prevents heat-shock induction of these operons. The chain is Heat-inducible transcription repressor HrcA from Bacillus anthracis (strain A0248).